A 158-amino-acid polypeptide reads, in one-letter code: NAD(P)H-quinone oxidoreductase subunit J, chloroplastic (158 aa).

This sequence belongs to the complex I 30 kDa subunit family. In terms of assembly, NDH is composed of at least 16 different subunits, 5 of which are encoded in the nucleus.

The protein localises to the plastid. The protein resides in the chloroplast thylakoid membrane. It catalyses the reaction a plastoquinone + NADH + (n+1) H(+)(in) = a plastoquinol + NAD(+) + n H(+)(out). The enzyme catalyses a plastoquinone + NADPH + (n+1) H(+)(in) = a plastoquinol + NADP(+) + n H(+)(out). NDH shuttles electrons from NAD(P)H:plastoquinone, via FMN and iron-sulfur (Fe-S) centers, to quinones in the photosynthetic chain and possibly in a chloroplast respiratory chain. The immediate electron acceptor for the enzyme in this species is believed to be plastoquinone. Couples the redox reaction to proton translocation, and thus conserves the redox energy in a proton gradient. This Cicer arietinum (Chickpea) protein is NAD(P)H-quinone oxidoreductase subunit J, chloroplastic.